Here is a 424-residue protein sequence, read N- to C-terminus: Histidine--tRNA ligase (424 aa).

This sequence belongs to the class-II aminoacyl-tRNA synthetase family. Homodimer.

The protein localises to the cytoplasm. The catalysed reaction is tRNA(His) + L-histidine + ATP = L-histidyl-tRNA(His) + AMP + diphosphate + H(+). The polypeptide is Histidine--tRNA ligase (Desulfitobacterium hafniense (strain DSM 10664 / DCB-2)).